A 687-amino-acid chain; its full sequence is Geranylgeranyl transferase type-2 subunit alpha 2 (687 aa).

PFTA repeat units follow at residues 38 to 72 (YTKEAIQLSAKLLITNPEFYTAWNYPKLAFESRLD), 83 to 117 (IIDEELGVVQNALERNVKSYGAWYHRKWVLSKKGH), 132 to 167 (YQKQAHQKQDDEKQDDPSRNFHAWNYRRFVVELTKT), 168 to 203 (SEEDELQYTTDMISDISFTIYSAWHYRSVLVSSLVA), and 214 to 248 (TIRRELDYVHSAIFTLEEKQSGWFYYLWLLDQTVK). 5 LRR repeats span residues 523 to 545 (MNNIICLRLNNLTLSRIAAVEKL), 546 to 567 (LFVQMLDLSHNELHSAEGLEAM), 568 to 591 (QLLCCLNLSHNRIRSFSALDSLRH), 592 to 616 (LKQLRVLDVSHNHICGELPVDTTRY), and 646 to 668 (LMKLKQLDIRGNDLIFAGEEFSS).

This sequence belongs to the protein prenyltransferase subunit alpha family. Heterotrimer composed of the alpha subunit RGTA, the beta subunit RGTB and REP; within this trimer, RGTA and RGTB form the catalytic component, while REP mediates peptide substrate binding.

It carries out the reaction geranylgeranyl diphosphate + L-cysteinyl-[protein] = S-geranylgeranyl-L-cysteinyl-[protein] + diphosphate. With respect to regulation, the enzymatic reaction requires the aid of the Rab escort protein REP. In terms of biological role, catalyzes the transfer of a geranylgeranyl moiety from geranylgeranyl diphosphate to both cysteines of Rab proteins with the C-terminal sequence -CCXX, CXXX, -XCCX and -XCXC, such as RABA1A, RABA2A, RABF2A and RABG2. Does not seem to be a functional Rab-GGT alpha subunit in vitro. The chain is Geranylgeranyl transferase type-2 subunit alpha 2 from Arabidopsis thaliana (Mouse-ear cress).